The primary structure comprises 31 residues: Cyclotide vibi-G (31 aa).

The segment at residues 1–31 (GTFPCGESCVFIPCLTSAIGCSCKSKVCYKN) is a cross-link (cyclopeptide (Gly-Asn)). 3 disulfide bridges follow: Cys-5–Cys-21, Cys-9–Cys-23, and Cys-14–Cys-28.

Post-translationally, this is a cyclic peptide.

Probably participates in a plant defense mechanism. Has cytotoxic activity, active against a human lymphoma cell line with an IC(50) of 0.96 uM. The sequence is that of Cyclotide vibi-G from Viola biflora (Yellow wood violet).